A 614-amino-acid polypeptide reads, in one-letter code: Zinc metalloproteinase-disintegrin-like HR1b (614 aa).

An N-terminal signal peptide occupies residues 1-20 (MIQVLLVTICLAVFPYQGSS). Residues 21-191 (IILESGNVND…KASKLVVTAE (171 aa)) constitute a propeptide that is removed on maturation. Glutamine 192 is modified (pyrrolidone carboxylic acid). The 197-residue stretch at 198–394 (RYIKLAIVVD…HKPQCILNAP (197 aa)) folds into the Peptidase M12B domain. N-linked (GlcNAc...) asparagine glycosylation is present at asparagine 264. Intrachain disulfides connect cysteine 309–cysteine 389, cysteine 349–cysteine 373, and cysteine 351–cysteine 356. A Zn(2+)-binding site is contributed by histidine 334. Residue glutamate 335 is part of the active site. 2 residues coordinate Zn(2+): histidine 338 and histidine 344. Residue asparagine 372 is glycosylated (N-linked (GlcNAc...) asparagine). Positions 395 to 398 (SKTD) are excised as a propeptide. The Disintegrin domain occupies 402–488 (PPVCGNELLE…DCPTDRFHRN (87 aa)). Ca(2+) contacts are provided by valine 404, asparagine 407, leucine 409, glutamate 411, glutamate 414, and aspartate 417. Cystine bridges form between cysteine 405–cysteine 424, cysteine 405–cysteine 434, cysteine 416–cysteine 429, cysteine 416–cysteine 434, cysteine 418–cysteine 424, cysteine 428–cysteine 451, cysteine 442–cysteine 448, cysteine 447–cysteine 473, cysteine 460–cysteine 480, cysteine 467–cysteine 492, cysteine 467–cysteine 499, cysteine 492–cysteine 504, cysteine 499–cysteine 504, cysteine 511–cysteine 526, cysteine 511–cysteine 561, cysteine 526–cysteine 568, cysteine 539–cysteine 549, cysteine 549–cysteine 556, cysteine 556–cysteine 593, cysteine 561–cysteine 568, cysteine 587–cysteine 598, and cysteine 593–cysteine 598. The short motif at 466–468 (ECD) is the D/ECD-tripeptide element. Asparagine 518 is a glycosylation site (N-linked (GlcNAc...) asparagine). Asparagine 571 carries an N-linked (GlcNAc...) asparagine glycan. Positions 608 to 614 (TTVFSLI) are excised as a propeptide.

This sequence belongs to the venom metalloproteinase (M12B) family. P-III subfamily. P-IIIb sub-subfamily. In terms of assembly, monomer. Zn(2+) is required as a cofactor. In terms of tissue distribution, expressed by the venom gland.

The protein resides in the secreted. Its function is as follows. Zinc protease that induces hemorrhage. Has preference for Tyr, Leu, Arg, Met, and Phe at the P1 position, in descending order (in vitro). Shows equal preference for the sequences of Ala-Asp and Arg-Ile at the P3-P2 position with different enzyme cleavage sites across the P1 position: the N-terminus side for Ala-Asp and the C-terminus side for Arg-Ile. Functionally, inhibits platelet aggregation induced by ADP, thrombin, platelet-activating factor and collagen. Acts by inhibiting fibrinogen interaction with platelet receptors alpha-IIb/beta-3 (ITGA2B/ITGB3). In Protobothrops flavoviridis (Habu), this protein is Zinc metalloproteinase-disintegrin-like HR1b.